We begin with the raw amino-acid sequence, 305 residues long: Deoxyhypusine hydroxylase (305 aa).

2 HEAT-like PBS-type repeats span residues 54 to 80 (LKHE…VLKD) and 87 to 113 (VRHE…YAED). Fe cation is bound by residues H56, H89, and E90. The disordered stretch occupies residues 137–160 (EQTKDGTDENPYCSVDPAPPAQRK). HEAT-like PBS-type repeat units follow at residues 178 to 204 (DRYR…GLQC), 209 to 235 (FRHE…ALEK), and 242 to 268 (VRHE…YRKD). The Fe cation site is built by H211, H244, and E245.

This sequence belongs to the deoxyhypusine hydroxylase family. Requires Fe(2+) as cofactor.

The enzyme catalyses [eIF5A protein]-deoxyhypusine + AH2 + O2 = [eIF5A protein]-hypusine + A + H2O. Its pathway is protein modification; eIF5A hypusination. In terms of biological role, catalyzes the hydroxylation of the N(6)-(4-aminobutyl)-L-lysine intermediate produced by deoxyhypusine synthase/DHPS on a critical lysine of the eukaryotic translation initiation factor 5A/eIF-5A. This is the second step of the post-translational modification of that lysine into an unusual amino acid residue named hypusine. Hypusination is unique to mature eIF-5A factor and is essential for its function. The protein is Deoxyhypusine hydroxylase (dohh) of Danio rerio (Zebrafish).